The primary structure comprises 240 residues: MSWQRPDGRQPNQLRPVNFELNFTRFSAGSVLAQCGETKVLCTASIEEYVPRFLLGSGQGWLTAEYRMLPSATQERQRRELLKLSGRTQEIQRLIGRSLRSCIDLQQLGERSITIDCDVLQADAGTRTTSITGGYVALALALNKLIKKGELIQSPLRFPVAAISVGLIEGEAFLDLNYPEDSKADIDFNVVMTGNLDLIEVQGTAEENSFTRSQLNDILDLAELGIKELVSLQNQALSQA.

Phosphate-binding positions include Arg-87 and 125–127 (GTR).

This sequence belongs to the RNase PH family. In terms of assembly, homohexameric ring arranged as a trimer of dimers.

The enzyme catalyses tRNA(n+1) + phosphate = tRNA(n) + a ribonucleoside 5'-diphosphate. Its function is as follows. Phosphorolytic 3'-5' exoribonuclease that plays an important role in tRNA 3'-end maturation. Removes nucleotide residues following the 3'-CCA terminus of tRNAs; can also add nucleotides to the ends of RNA molecules by using nucleoside diphosphates as substrates, but this may not be physiologically important. Probably plays a role in initiation of 16S rRNA degradation (leading to ribosome degradation) during starvation. The sequence is that of Ribonuclease PH from Crocosphaera subtropica (strain ATCC 51142 / BH68) (Cyanothece sp. (strain ATCC 51142)).